We begin with the raw amino-acid sequence, 247 residues long: Flavin-dependent thymidylate synthase (247 aa).

Residues 1–237 enclose the ThyX domain; the sequence is MDVKLLEATD…PKTFEYYEQE (237 aa). DUMP-binding positions include 85 to 88, 98 to 100, and Arg176; these read QITR and SMR. Residue 88-90 coordinates FAD; it reads RHR. The short motif at 88–98 is the ThyX motif element; it reads RHRHVSFDVQS. Residues 192-194 and His198 each bind FAD; that span reads NAR. Arg203 contacts dUMP. Catalysis depends on Arg203, which acts as the Involved in ionization of N3 of dUMP, leading to its activation.

Belongs to the thymidylate synthase ThyX family. In terms of assembly, homotetramer. FAD is required as a cofactor.

It carries out the reaction dUMP + (6R)-5,10-methylene-5,6,7,8-tetrahydrofolate + NADPH + H(+) = dTMP + (6S)-5,6,7,8-tetrahydrofolate + NADP(+). It functions in the pathway pyrimidine metabolism; dTTP biosynthesis. In terms of biological role, catalyzes the reductive methylation of 2'-deoxyuridine-5'-monophosphate (dUMP) to 2'-deoxythymidine-5'-monophosphate (dTMP) while utilizing 5,10-methylenetetrahydrofolate (mTHF) as the methyl donor, and NADPH and FADH(2) as the reductant. This chain is Flavin-dependent thymidylate synthase, found in Haloarcula marismortui (strain ATCC 43049 / DSM 3752 / JCM 8966 / VKM B-1809) (Halobacterium marismortui).